Reading from the N-terminus, the 141-residue chain is uncharacterized protein (141 aa).

This is an uncharacterized protein from Saccharomyces cerevisiae (strain ATCC 204508 / S288c) (Baker's yeast).